Reading from the N-terminus, the 479-residue chain is Alliin lyase (479 aa).

Residues 1-25 (MESYDKVGSNKVPCLLILTCIIMSS) form the signal peptide. A propeptide spanning residues 26 to 34 (FVNNNIVQA) is cleaved from the precursor. Positions 47–93 (EAVANINCSGHGRAFLDGILSDGSPKCECNTCYTGADCSEKITGCSA) constitute an EGF-like; atypical domain. The N-linked (GlcNAc...) asparagine glycan is linked to Asn-53. Cystine bridges form between Cys-54/Cys-73, Cys-75/Cys-84, and Cys-78/Cys-91. 126 to 134 (YFFNPVSNF) provides a ligand contact to chloride. Asn-180 and Asn-225 each carry an N-linked (GlcNAc...) asparagine glycan. Lys-285 is subject to N6-(pyridoxal phosphate)lysine. 2 N-linked (GlcNAc...) asparagine glycosylation sites follow: Asn-342 and Asn-362. The cysteines at positions 402 and 410 are disulfide-linked.

This sequence belongs to the alliinase family. In terms of assembly, homodimer. Pyridoxal 5'-phosphate is required as a cofactor.

Its subcellular location is the vacuole. It catalyses the reaction an S-alkyl-L-cysteine S-oxide = an S-alkyl sulfenate + 2-aminoprop-2-enoate. The protein is Alliin lyase of Allium cepa (Onion).